The chain runs to 153 residues: Peptide methionine sulfoxide reductase B6 (153 aa).

A MsrB domain is found at 28 to 149; the sequence is NEEWRTVLSP…NSVALKFSSA (122 aa). The Zn(2+) site is built by cysteine 67, cysteine 70, cysteine 113, and cysteine 116. A disulfide bond links cysteine 85 and cysteine 138. Residue cysteine 138 is the Nucleophile of the active site.

It belongs to the MsrB Met sulfoxide reductase family. Zn(2+) is required as a cofactor.

It is found in the cytoplasm. It localises to the cytosol. The enzyme catalyses L-methionyl-[protein] + [thioredoxin]-disulfide + H2O = L-methionyl-(R)-S-oxide-[protein] + [thioredoxin]-dithiol. Its function is as follows. Catalyzes the reduction of methionine sulfoxide (MetSO) to methionine in proteins. Plays a protective role against oxidative stress by restoring activity to proteins that have been inactivated by methionine oxidation. MSRB family specifically reduces the MetSO R-enantiomer. This is Peptide methionine sulfoxide reductase B6 (MSRB6) from Arabidopsis thaliana (Mouse-ear cress).